A 4218-amino-acid chain; its full sequence is Protein Obscurin (4218 aa).

Residues 3–71 (AVADIVFVSR…PIDILEFNPT (69 aa)) enclose the SH3 domain. Residues 86 to 264 (RKLTILRELV…LSVPSRAYDN (179 aa)) enclose the DH domain. Positions 439-466 (SKETKERLQHEQQELLKLEQEAIELYKK) form a coiled coil. Disordered regions lie at residues 465–592 (KKQQ…SHSK), 684–703 (SLRD…QQGY), 728–750 (SGAN…NFTR), and 923–1010 (RYET…EDRP). Composition is skewed to low complexity over residues 466–490 (KQQS…VKSS) and 505–517 (AQVK…KVVS). Residues 578–592 (KEVRKEVPPSASHSK) show a composition bias toward basic and acidic residues. The segment covering 923–935 (RYETKTRDYDRGT) has biased composition (basic and acidic residues). The span at 936–948 (SYDSTVERSQYGI) shows a compositional bias: polar residues. Composition is skewed to basic and acidic residues over residues 950 to 962 (SRRD…KVEA) and 972 to 986 (TESR…RAES). A compositionally biased stretch (low complexity) spans 987 to 996 (RASYSVAESR). Ig-like C2-type domains lie at 1017–1103 (PVVV…TTVS), 1152–1298 (PRVK…AELS), 1313–1400 (PTLV…SSIN), 1504–1594 (PVIV…TQLL), 1599–1689 (PEFT…CVVT), 1694–1785 (PKVK…CKVA), 1815–1906 (PEIV…LSLS), 2018–2107 (PEIS…FNLA), 2113–2214 (PTFI…FKLA), 2220–2305 (PSFV…EKVA), 2318–2409 (PKFL…VEIV), 2415–2505 (PVFV…AKLY), 2519–2609 (PQFV…ANVR), 2614–2698 (PPVF…KDIT), and 2716–2792 (PPVF…SCRI). Cysteines 1199 and 1282 form a disulfide. A disulfide bridge connects residues C2739 and C2790. The Fibronectin type-III 1 domain occupies 2832–2933 (APPPLSEGPI…TYRQKLVPDP (102 aa)). In terms of domain architecture, Protein kinase 1 spans 3186–3440 (YDIGDELGRG…VKTALKHPWF (255 aa)). G3198, K3215, E3260, A3262, E3266, K3310, and D3326 together coordinate ATP. The 85-residue stretch at 3654–3738 (PFFREKPQTI…ARNKVGQTVA (85 aa)) folds into the Ig-like C2-type 16 domain. A Fibronectin type-III 2 domain is found at 3750 to 3843 (APDSPEISAN…IPVSASTVGG (94 aa)). One can recognise a Protein kinase 2 domain in the interval 3897 to 4151 (YSFISEIARG…TEDCLEHRWL (255 aa)).

Belongs to the protein kinase superfamily. CAMK Ser/Thr protein kinase family. Interacts with myosin. May interact (via protein kinase domain 1) with ball. May interact (via protein kinase domain 1 or 2) with mask. May interact (via protein kinase domain 2) with Tm1/tropomyosin-1. Expressed in the thoracic muscles including the indirect flight muscles (IFM) (at protein level).

It localises to the cytoplasm. The protein localises to the myofibril. Its subcellular location is the sarcomere. It is found in the m line. Structural component of the muscle M line which is involved in assembly and organization of sarcomere. Required for the development and organization of indirect flight muscle sarcomeres by regulating the formation of M line and H zone and the correct assembly of thick and thin filaments in the sarcomere. Lacks serine/threonine-protein kinase activity. The sequence is that of Protein Obscurin from Drosophila melanogaster (Fruit fly).